A 670-amino-acid polypeptide reads, in one-letter code: Receptor for retinol uptake STRA6 (670 aa).

The Extracellular portion of the chain corresponds to 1–50 (MESQASENGSQTSSGVTDDYSSWYIEEPLGAEEVQPEGVIPLCQLTAPPA). Asparagine 8 is a glycosylation site (N-linked (GlcNAc...) asparagine). The chain crosses the membrane as a helical span at residues 51–71 (LLHACLASLSFLVLLLLALLV). The Cytoplasmic portion of the chain corresponds to 72 to 97 (RRRRLWPRCGHRGLGLPSPVDFLAGD). The helical transmembrane segment at 98–118 (LSWTVPAAVFVVLFSNLCLLL) threads the bilayer. Over 119–144 (PDENPLPFLNLTAASSPDGEMETSRG) the chain is Extracellular. A glycan (N-linked (GlcNAc...) asparagine) is linked at asparagine 128. Residues 145-165 (PWKLLALLYYPALYYPLAACA) traverse the membrane as a helical segment. Residues 166–168 (SAG) lie on the Cytoplasmic side of the membrane. A helical transmembrane segment spans residues 169 to 189 (HQAAFLLGTVLSWAHFGVQVW). The Extracellular segment spans residues 190-205 (QKAECPQDPKIYKHYS). The chain crosses the membrane as a helical span at residues 206–226 (LLASLPLLLGLGFLSLWYPVQ). Residues 227 to 296 (LVQSLRHRTG…PQPGFRLPLK (70 aa)) lie on the Cytoplasmic side of the membrane. An interaction with RBP1 region spans residues 235 to 294 (TGAGSQGLQTSYSEKYLRTLLCPKKLDSCSHPASKRSLLSRAWAFSHHSIYTPQPGFRLP). A helical transmembrane segment spans residues 297–317 (LVISATLTGTATYQVALLLLV). Over 318 to 368 (SVVPTVQKVRAGINTDVSYLLAGFGIVLSEDRQEVVELVKHHLWTVEACYI) the chain is Extracellular. The helical transmembrane segment at 369 to 389 (SALVLSCASTFLLLIRSLRTH) threads the bilayer. Residues 390 to 423 (RANLQALHRGAALDLDPPLQSIHPSRQAIVSWMS) lie on the Cytoplasmic side of the membrane. A helical membrane pass occupies residues 424-444 (FCAYQTAFSCLGLLVQQVIFF). The Extracellular portion of the chain corresponds to 445 to 474 (LGTTSLAFLVFVPLLHGRNLLLLRSLESTW). A helical membrane pass occupies residues 475 to 495 (PFWLTVALAVILQNIAANWIF). Residues 496-510 (LRTHHGYPELTNRRM) are Cytoplasmic-facing. An intramembrane region (helical) is located at residues 511-548 (LCVATFLLFPINMLVGAIMAVWRVLISSLYNTVHLGQM). Residues 549 to 670 (DLSLLPQRAA…TSAKANGTQP (122 aa)) are Cytoplasmic-facing. Tyrosine 644 carries the phosphotyrosine modification.

In terms of assembly, homodimer. Interacts with JAK2 and STAT5. Interacts (via extracellular domains) with RBP4. Interacts (via cytoplasmic domains) with RBP1. Phosphorylated on tyrosine residues in response to RBP4 binding. Phosphorylation requires the presence of LRAT, suggesting it may be triggered by the uptake of retinol that is then metabolized within the cell to retinoids that function as signaling molecules. As to expression, widely expressed in the embryo. Detected in adult in the retinal pigment epithelium in the eye. In the adult, is highly expressed in cells that compose blood-organ barriers in the brain (choroid plexus and the brain microvascular), in testis (the basal layer of the seminiferous epithelium), in the yolk sac, and in the chorioallantoic placenta. Detected in white adipose tissue and skeletal muscle, but not in liver (at protein level). Widely expressed in adult, with high expression levels in the eye. Detected in brain, cerebellum, testis, pituitary, pancreas, kidney, spleen, and female genital tract; and at very low levels in heart and lung. Not detected in liver.

The protein resides in the cell membrane. Functions as a retinol transporter. Accepts all-trans retinol from the extracellular retinol-binding protein RBP4, facilitates retinol transport across the cell membrane, and then transfers retinol to the cytoplasmic retinol-binding protein RBP1. Retinol uptake is enhanced by LRAT, an enzyme that converts retinol to all-trans retinyl esters, the storage forms of vitamin A. Contributes to the activation of a signaling cascade that depends on retinol transport and LRAT-dependent generation of retinol metabolites that then trigger activation of JAK2 and its target STAT5, and ultimately increase the expression of SOCS3 and inhibit cellular responses to insulin. Important for the homeostasis of vitamin A and its derivatives, such as retinoic acid and 11-cis-retinal. STRA6-mediated transport is particularly important in the eye, and under conditions of dietary vitamin A deficiency. Does not transport retinoic acid. The sequence is that of Receptor for retinol uptake STRA6 (Stra6) from Mus musculus (Mouse).